A 769-amino-acid polypeptide reads, in one-letter code: Subtilisin-like protease 3 (769 aa).

Residues Asn-68, Asn-102, Asn-108, Asn-295, Asn-316, and Asn-356 are each glycosylated (N-linked (GlcNAc...) asparagine). The segment covering 293-302 (KINHSNKHKN) has biased composition (basic residues). The segment at 293–329 (KINHSNKHKNNNNNNNNNDYHNNNKSNYHSHSSAKCQ) is disordered. The span at 303–325 (NNNNNNNNDYHNNNKSNYHSHSS) shows a compositional bias: low complexity. The region spanning 345–756 (GYDIIQMEEG…GGFINVYDLV (412 aa)) is the Peptidase S8 domain. Asp-372 functions as the Charge relay system in the catalytic mechanism. A disordered region spans residues 468–493 (NIKSSDNIKSSDNINSSDNIKSSDNN). 2 N-linked (GlcNAc...) asparagine glycosylation sites follow: Asn-482 and Asn-515. His-523 serves as the catalytic Charge relay system. 2 N-linked (GlcNAc...) asparagine glycosylation sites follow: Asn-584 and Asn-616. Ser-701 functions as the Charge relay system in the catalytic mechanism. N-linked (GlcNAc...) asparagine glycosylation occurs at Asn-720.

It belongs to the peptidase S8 family.

The protein localises to the secreted. It catalyses the reaction Hydrolysis of proteins with broad specificity for peptide bonds, and a preference for a large uncharged residue in P1. Hydrolyzes peptide amides.. Serine protease which may cleave PFN/profilin. This is Subtilisin-like protease 3 from Plasmodium falciparum (isolate 3D7).